The primary structure comprises 1748 residues: WD repeat-containing protein 90 (1748 aa).

Residues 1 to 207 (MARAWQHPFL…VTPMPREMAF (207 aa)) form a binds with microtubules region. S241 bears the Phosphoserine mark. Positions 274 to 308 (QTPSPTASGRAALAPRPFPEVSLSQERSDASNADG) are disordered. WD repeat units follow at residues 407-450 (GHTD…CLFR), 452-494 (PMHV…LGGE), 501-541 (AHTD…LRSC), 615-654 (SSGP…VLLE), 656-695 (EHEG…YHML), 698-737 (SHTA…QLYD), 740-779 (SSED…VLVE), 782-821 (CHRG…WHVL), 882-922 (SRLD…IIRE), 926-964 (VHPE…SPGP), 969-1009 (GHSE…QSFP), 1156-1201 (GHSA…CQHL), 1204-1245 (PHST…LVSS), 1247-1286 (RLPE…ADIS), 1298-1326 (VGAG…VCVW), 1327-1376 (DTRA…ELRC), 1433-1472 (GHRS…LVIQ), 1475-1520 (VLNQ…MELK), 1523-1562 (PHPV…TFRV), 1568-1614 (GAPI…NHCE), and 1715-1748 (GHDN…VPGL). The segment at 1004 to 1071 (SDQSFPGAPP…GARDTRNSGA (68 aa)) is disordered.

The protein belongs to the WD repeat WDR90/POC16 family.

It localises to the cytoplasm. It is found in the cytoskeleton. The protein localises to the microtubule organizing center. Its subcellular location is the centrosome. The protein resides in the centriole. It localises to the centriolar satellite. In terms of biological role, microtubule-binding protein that plays a crucial role in ensuring inner core protein localization within the centriole core, as well as in maintaining the microtubule wall integrity and the overall centriole roundness and stability. Required for efficient primary cilium formation. This Homo sapiens (Human) protein is WD repeat-containing protein 90 (WDR90).